We begin with the raw amino-acid sequence, 157 residues long: UPF0179 protein Mhun_1135 (157 aa).

It belongs to the UPF0179 family.

This chain is UPF0179 protein Mhun_1135, found in Methanospirillum hungatei JF-1 (strain ATCC 27890 / DSM 864 / NBRC 100397 / JF-1).